Reading from the N-terminus, the 192-residue chain is Flagellar transcriptional regulator FlhC (192 aa).

The Zn(2+) site is built by Cys137, Cys140, Cys157, and Cys160.

Belongs to the FlhC family. As to quaternary structure, heterohexamer composed of two FlhC and four FlhD subunits. Each FlhC binds a FlhD dimer, forming a heterotrimer, and a hexamer assembles by dimerization of two heterotrimers. The cofactor is Zn(2+).

It is found in the cytoplasm. Its function is as follows. Functions in complex with FlhD as a master transcriptional regulator that regulates transcription of several flagellar and non-flagellar operons by binding to their promoter region. Activates expression of class 2 flagellar genes, including fliA, which is a flagellum-specific sigma factor that turns on the class 3 genes. Also regulates genes whose products function in a variety of physiological pathways. The sequence is that of Flagellar transcriptional regulator FlhC from Escherichia coli O6:H1 (strain CFT073 / ATCC 700928 / UPEC).